The primary structure comprises 91 residues: Small ribosomal subunit protein eS24 (91 aa).

A disordered region spans residues 51–91; sequence QRRKDAAAHKEAYNAMPEAERRHLNSEKYANRKAEVSYKHR.

Belongs to the eukaryotic ribosomal protein eS24 family.

In Caenorhabditis elegans, this protein is Small ribosomal subunit protein eS24.